The sequence spans 343 residues: L-threonine 3-dehydrogenase (343 aa).

Residue Cys-38 participates in Zn(2+) binding. Residues Thr-40 and His-43 each act as charge relay system in the active site. 6 residues coordinate Zn(2+): His-63, Glu-64, Cys-93, Cys-96, Cys-99, and Cys-107. Residues Ile-175, Asp-195, Arg-200, 262 to 264 (LGI), and 286 to 287 (IY) each bind NAD(+).

Belongs to the zinc-containing alcohol dehydrogenase family. Homotetramer. Requires Zn(2+) as cofactor.

It localises to the cytoplasm. It carries out the reaction L-threonine + NAD(+) = (2S)-2-amino-3-oxobutanoate + NADH + H(+). It functions in the pathway amino-acid degradation; L-threonine degradation via oxydo-reductase pathway; glycine from L-threonine: step 1/2. Catalyzes the NAD(+)-dependent oxidation of L-threonine to 2-amino-3-ketobutyrate. The protein is L-threonine 3-dehydrogenase of Burkholderia thailandensis (strain ATCC 700388 / DSM 13276 / CCUG 48851 / CIP 106301 / E264).